The sequence spans 204 residues: Holliday junction branch migration complex subunit RuvA (204 aa).

Residues 1–64 (MIGKLKGTID…EDQLKLFGFM (64 aa)) are domain I. The segment at 65-143 (TALEREWFNL…AFAGEAINIA (79 aa)) is domain II. Residues 144-151 (LKQELGEG) form a flexible linker region. The interval 152–204 (VAAAPVADAVSALTNLGYSRDQAANAVAAAMKTAGDDADSAKLIRLGLKELAR) is domain III.

The protein belongs to the RuvA family. Homotetramer. Forms an RuvA(8)-RuvB(12)-Holliday junction (HJ) complex. HJ DNA is sandwiched between 2 RuvA tetramers; dsDNA enters through RuvA and exits via RuvB. An RuvB hexamer assembles on each DNA strand where it exits the tetramer. Each RuvB hexamer is contacted by two RuvA subunits (via domain III) on 2 adjacent RuvB subunits; this complex drives branch migration. In the full resolvosome a probable DNA-RuvA(4)-RuvB(12)-RuvC(2) complex forms which resolves the HJ.

Its subcellular location is the cytoplasm. In terms of biological role, the RuvA-RuvB-RuvC complex processes Holliday junction (HJ) DNA during genetic recombination and DNA repair, while the RuvA-RuvB complex plays an important role in the rescue of blocked DNA replication forks via replication fork reversal (RFR). RuvA specifically binds to HJ cruciform DNA, conferring on it an open structure. The RuvB hexamer acts as an ATP-dependent pump, pulling dsDNA into and through the RuvAB complex. HJ branch migration allows RuvC to scan DNA until it finds its consensus sequence, where it cleaves and resolves the cruciform DNA. This is Holliday junction branch migration complex subunit RuvA from Rhizobium leguminosarum bv. trifolii (strain WSM2304).